Reading from the N-terminus, the 188-residue chain is A-type ATP synthase subunit E (188 aa).

This sequence belongs to the V-ATPase E subunit family. Has multiple subunits with at least A(3), B(3), C, D, E, F, H, I and proteolipid K(x).

It localises to the cell membrane. In terms of biological role, component of the A-type ATP synthase that produces ATP from ADP in the presence of a proton gradient across the membrane. This chain is A-type ATP synthase subunit E, found in Archaeoglobus fulgidus (strain ATCC 49558 / DSM 4304 / JCM 9628 / NBRC 100126 / VC-16).